The chain runs to 263 residues: MSQADLLDQDPVFQLKGSMLAVTILELAHNDLARLERQLADKVAQAPNFFRDTPLVMALDKLPEGEGRLDLPALLEVCRRHGLRTLAIRAGREEDIAAAQALDLPVLPPSGARERPLDIKDSAPRKPAEEPSPSAGEARPEPAKAEEKPAEPVSRPTKVVKTPVRGGMQIYAAGGDLIVLAAVSPGAELLADGNIHVYGPMRGRALAGVKGDATARIFCQQLAAELVSIAGNYKVAEDLRRSPQWGKAVHVSLSGDVLNITRL.

The segment at 107–159 (LPPSGARERPLDIKDSAPRKPAEEPSPSAGEARPEPAKAEEKPAEPVSRPTKV) is disordered. Composition is skewed to basic and acidic residues over residues 112–129 (ARER…KPAE) and 138–150 (ARPE…EKPA).

Belongs to the MinC family. Interacts with MinD and FtsZ.

Its function is as follows. Cell division inhibitor that blocks the formation of polar Z ring septums. Rapidly oscillates between the poles of the cell to destabilize FtsZ filaments that have formed before they mature into polar Z rings. Prevents FtsZ polymerization. In Pseudomonas aeruginosa (strain LESB58), this protein is Probable septum site-determining protein MinC.